The chain runs to 440 residues: Ribosomal protein uS12 methylthiotransferase RimO (440 aa).

The MTTase N-terminal domain maps to 6–116; it reads PKVGFVSLGC…VVTAVHEVVP (111 aa). The [4Fe-4S] cluster site is built by C15, C51, C80, C149, C153, and C156. The Radical SAM core domain occupies 135-373; that stretch reads LTPRHYAYLK…MAHQQAISAA (239 aa). In terms of domain architecture, TRAM spans 376–440; the sequence is QLKVGKEIEV…DEYDLWAELV (65 aa).

The protein belongs to the methylthiotransferase family. RimO subfamily. [4Fe-4S] cluster serves as cofactor.

Its subcellular location is the cytoplasm. The enzyme catalyses L-aspartate(89)-[ribosomal protein uS12]-hydrogen + (sulfur carrier)-SH + AH2 + 2 S-adenosyl-L-methionine = 3-methylsulfanyl-L-aspartate(89)-[ribosomal protein uS12]-hydrogen + (sulfur carrier)-H + 5'-deoxyadenosine + L-methionine + A + S-adenosyl-L-homocysteine + 2 H(+). Catalyzes the methylthiolation of an aspartic acid residue of ribosomal protein uS12. The polypeptide is Ribosomal protein uS12 methylthiotransferase RimO (Pseudomonas aeruginosa (strain UCBPP-PA14)).